Consider the following 241-residue polypeptide: PHD finger protein ALFIN-LIKE 1 (241 aa).

At Ala-2 the chain carries N-acetylalanine. The interval 142 to 182 (DGKPSMDLGSKSRNGVKRSIEGQTKSTPKLMEESYEDEDDE) is disordered. A PHD-type zinc finger spans residues 185–237 (DTLCGSCGGNYTNDEFWICCDVCERWYHGKCVKITPAKAESIKQYKCPSCCTK).

The protein belongs to the Alfin family. Interacts with H3K4me3 and to a lesser extent with H3K4me2. In terms of tissue distribution, ubiquitously expressed.

It is found in the nucleus. Functionally, histone-binding component that specifically recognizes H3 tails trimethylated on 'Lys-4' (H3K4me3), which mark transcription start sites of virtually all active genes. This Arabidopsis thaliana (Mouse-ear cress) protein is PHD finger protein ALFIN-LIKE 1 (AL1).